A 141-amino-acid polypeptide reads, in one-letter code: Nucleoside diphosphate kinase (141 aa).

ATP contacts are provided by Lys11, Phe59, Arg87, Thr93, Arg104, and Asn114. His117 serves as the catalytic Pros-phosphohistidine intermediate.

The protein belongs to the NDK family. Homotetramer. The cofactor is Mg(2+).

It localises to the cytoplasm. The catalysed reaction is a 2'-deoxyribonucleoside 5'-diphosphate + ATP = a 2'-deoxyribonucleoside 5'-triphosphate + ADP. It carries out the reaction a ribonucleoside 5'-diphosphate + ATP = a ribonucleoside 5'-triphosphate + ADP. Functionally, major role in the synthesis of nucleoside triphosphates other than ATP. The ATP gamma phosphate is transferred to the NDP beta phosphate via a ping-pong mechanism, using a phosphorylated active-site intermediate. This chain is Nucleoside diphosphate kinase, found in Pseudomonas entomophila (strain L48).